The chain runs to 372 residues: Citrate/2-methylcitrate synthase (372 aa).

H188 contributes to the substrate binding site. H223 is an active-site residue. Residue 256–260 participates in CoA binding; it reads KIMGF. The active site involves H262. R272 is a binding site for substrate. Residue D314 is part of the active site. Residues R339 and R358 each coordinate substrate.

Belongs to the citrate synthase family.

The catalysed reaction is propanoyl-CoA + oxaloacetate + H2O = 2-methylcitrate + CoA + H(+). The enzyme catalyses oxaloacetate + acetyl-CoA + H2O = citrate + CoA + H(+). It participates in carbohydrate metabolism; tricarboxylic acid cycle; isocitrate from oxaloacetate: step 1/2. Involved in both the tricarboxylic acid (TCA) and methylcitric acid cycles. Has both 2-methylcitrate synthase and citrate synthase activities. Catalyzes the condensation of propionyl-CoA and oxaloacetate to yield 2-methylcitrate (2-MC) and CoA, and the condensation of acetyl-CoA and oxaloacetate to yield citrate and CoA. Has 2.3-fold higher activity as a 2-methylcitrate synthase. Catalyzes the formation of either (2S,3R)- or (2R,3S)-2-methylcitrate. This Bacillus subtilis (strain 168) protein is Citrate/2-methylcitrate synthase.